The primary structure comprises 294 residues: N-acetylmuramic acid 6-phosphate etherase (294 aa).

The 164-residue stretch at 54–217 folds into the SIS domain; the sequence is VTKSFEEEGR…STASMIGVGK (164 aa). The Proton donor role is filled by glutamate 82. Glutamate 113 is a catalytic residue.

The protein belongs to the GCKR-like family. MurNAc-6-P etherase subfamily. As to quaternary structure, homodimer.

The enzyme catalyses N-acetyl-D-muramate 6-phosphate + H2O = N-acetyl-D-glucosamine 6-phosphate + (R)-lactate. It participates in amino-sugar metabolism; N-acetylmuramate degradation. Its function is as follows. Specifically catalyzes the cleavage of the D-lactyl ether substituent of MurNAc 6-phosphate, producing GlcNAc 6-phosphate and D-lactate. The protein is N-acetylmuramic acid 6-phosphate etherase of Bacillus mycoides (strain KBAB4) (Bacillus weihenstephanensis).